The sequence spans 155 residues: Telokin-like protein 20 homolog (155 aa).

Positions 109 to 155 (KRAVAPPHHEPEPVPAEEGAVADRAEPESGDAPPSPKKQKLDEREQD) are disordered.

The sequence is that of Telokin-like protein 20 homolog from Orgyia pseudotsugata multicapsid polyhedrosis virus (OpMNPV).